Consider the following 210-residue polypeptide: Thymidylate kinase (210 aa).

10–17 (GGEGAGKS) serves as a coordination point for ATP.

This sequence belongs to the thymidylate kinase family.

The enzyme catalyses dTMP + ATP = dTDP + ADP. Phosphorylation of dTMP to form dTDP in both de novo and salvage pathways of dTTP synthesis. The protein is Thymidylate kinase of Magnetococcus marinus (strain ATCC BAA-1437 / JCM 17883 / MC-1).